Consider the following 202-residue polypeptide: Glycerol-3-phosphate acyltransferase (202 aa).

A run of 4 helical transmembrane segments spans residues 1 to 21 (MTLI…FGVL), 84 to 104 (AVAA…FLHF), 116 to 136 (ILLG…LAVA), and 143 to 163 (SLAA…FLGF).

This sequence belongs to the PlsY family. Probably interacts with PlsX.

The protein localises to the cell inner membrane. It catalyses the reaction an acyl phosphate + sn-glycerol 3-phosphate = a 1-acyl-sn-glycero-3-phosphate + phosphate. The protein operates within lipid metabolism; phospholipid metabolism. Its function is as follows. Catalyzes the transfer of an acyl group from acyl-phosphate (acyl-PO(4)) to glycerol-3-phosphate (G3P) to form lysophosphatidic acid (LPA). This enzyme utilizes acyl-phosphate as fatty acyl donor, but not acyl-CoA or acyl-ACP. This chain is Glycerol-3-phosphate acyltransferase, found in Nitrosospira multiformis (strain ATCC 25196 / NCIMB 11849 / C 71).